The chain runs to 234 residues: Lactate utilization protein C 1 (234 aa).

It belongs to the LutC/YkgG family.

Is involved in L-lactate degradation and allows cells to grow with lactate as the sole carbon source. In Bacillus mycoides (strain KBAB4) (Bacillus weihenstephanensis), this protein is Lactate utilization protein C 1.